The following is a 191-amino-acid chain: Peptidyl-tRNA hydrolase (191 aa).

Tyr-17 contacts tRNA. Residue His-22 is the Proton acceptor of the active site. Residues Tyr-68, Asn-70, and Asn-116 each coordinate tRNA.

This sequence belongs to the PTH family. Monomer.

It localises to the cytoplasm. It catalyses the reaction an N-acyl-L-alpha-aminoacyl-tRNA + H2O = an N-acyl-L-amino acid + a tRNA + H(+). In terms of biological role, hydrolyzes ribosome-free peptidyl-tRNAs (with 1 or more amino acids incorporated), which drop off the ribosome during protein synthesis, or as a result of ribosome stalling. Its function is as follows. Catalyzes the release of premature peptidyl moieties from peptidyl-tRNA molecules trapped in stalled 50S ribosomal subunits, and thus maintains levels of free tRNAs and 50S ribosomes. This chain is Peptidyl-tRNA hydrolase, found in Mycobacterium marinum (strain ATCC BAA-535 / M).